Here is a 358-residue protein sequence, read N- to C-terminus: Peptide chain release factor 1 (358 aa).

The residue at position 235 (Gln-235) is an N5-methylglutamine.

Belongs to the prokaryotic/mitochondrial release factor family. In terms of processing, methylated by PrmC. Methylation increases the termination efficiency of RF1.

Its subcellular location is the cytoplasm. Its function is as follows. Peptide chain release factor 1 directs the termination of translation in response to the peptide chain termination codons UAG and UAA. This is Peptide chain release factor 1 from Nitrosospira multiformis (strain ATCC 25196 / NCIMB 11849 / C 71).